The sequence spans 469 residues: Probable Xaa-Pro aminopeptidase PEPP (469 aa).

Mn(2+)-binding residues include Asp-265, Asp-276, Glu-399, and Glu-439.

It belongs to the peptidase M24B family. It depends on Mn(2+) as a cofactor.

It carries out the reaction Release of any N-terminal amino acid, including proline, that is linked to proline, even from a dipeptide or tripeptide.. Catalyzes the removal of a penultimate prolyl residue from the N-termini of peptides. The sequence is that of Probable Xaa-Pro aminopeptidase PEPP (PEPP) from Coccidioides posadasii (strain RMSCC 757 / Silveira) (Valley fever fungus).